The sequence spans 557 residues: Phosphomethylpyrimidine synthase (557 aa).

Residues asparagine 197, methionine 226, tyrosine 255, histidine 291, 311–313 (SRG), 352–355 (DGLR), and glutamate 391 each bind substrate. Histidine 395 contacts Zn(2+). Tyrosine 418 serves as a coordination point for substrate. Histidine 459 provides a ligand contact to Zn(2+). [4Fe-4S] cluster is bound by residues cysteine 539, cysteine 542, and cysteine 547.

It belongs to the ThiC family. As to quaternary structure, homodimer. The cofactor is [4Fe-4S] cluster.

The catalysed reaction is 5-amino-1-(5-phospho-beta-D-ribosyl)imidazole + S-adenosyl-L-methionine = 4-amino-2-methyl-5-(phosphooxymethyl)pyrimidine + CO + 5'-deoxyadenosine + formate + L-methionine + 3 H(+). The protein operates within cofactor biosynthesis; thiamine diphosphate biosynthesis. Functionally, catalyzes the synthesis of the hydroxymethylpyrimidine phosphate (HMP-P) moiety of thiamine from aminoimidazole ribotide (AIR) in a radical S-adenosyl-L-methionine (SAM)-dependent reaction. The protein is Phosphomethylpyrimidine synthase of Anaplasma phagocytophilum (strain HZ).